We begin with the raw amino-acid sequence, 132 residues long: Small ribosomal subunit protein uS13 (132 aa).

The tract at residues 106-132 is disordered; it reads PVRGQVTQKNARTRKGPRKTVAGKKGK. Basic residues predominate over residues 116 to 132; that stretch reads ARTRKGPRKTVAGKKGK.

Belongs to the universal ribosomal protein uS13 family. Part of the 30S ribosomal subunit. Forms a loose heterodimer with protein S19. Forms two bridges to the 50S subunit in the 70S ribosome.

In terms of biological role, located at the top of the head of the 30S subunit, it contacts several helices of the 16S rRNA. In the 70S ribosome it contacts the 23S rRNA (bridge B1a) and protein L5 of the 50S subunit (bridge B1b), connecting the 2 subunits; these bridges are implicated in subunit movement. Contacts the tRNAs in the A and P-sites. The chain is Small ribosomal subunit protein uS13 from Mycoplasmopsis pulmonis (strain UAB CTIP) (Mycoplasma pulmonis).